Reading from the N-terminus, the 434-residue chain is Bestrophin homolog 12 (434 aa).

4 consecutive transmembrane segments (helical) span residues 31-51, 76-96, 244-264, and 278-298; these read KVIL…FLVF, VCIP…DQWE, IPIP…YFFF, and WALS…FLVG.

This sequence belongs to the anion channel-forming bestrophin (TC 1.A.46) family. Calcium-sensitive chloride channel subfamily. In terms of assembly, forms oligomers.

It localises to the cell membrane. Its function is as follows. Forms chloride channels. The chain is Bestrophin homolog 12 (best-12) from Caenorhabditis elegans.